We begin with the raw amino-acid sequence, 1414 residues long: DNA-directed RNA polymerase subunit beta' (1414 aa).

The Zn(2+) site is built by C70, C72, C85, and C88. Residues D461, D463, and D465 each contribute to the Mg(2+) site. Zn(2+)-binding residues include C820, C894, C901, and C904.

Belongs to the RNA polymerase beta' chain family. In terms of assembly, the RNAP catalytic core consists of 2 alpha, 1 beta, 1 beta' and 1 omega subunit. When a sigma factor is associated with the core the holoenzyme is formed, which can initiate transcription. The cofactor is Mg(2+). Requires Zn(2+) as cofactor.

The catalysed reaction is RNA(n) + a ribonucleoside 5'-triphosphate = RNA(n+1) + diphosphate. Functionally, DNA-dependent RNA polymerase catalyzes the transcription of DNA into RNA using the four ribonucleoside triphosphates as substrates. The polypeptide is DNA-directed RNA polymerase subunit beta' (Cupriavidus taiwanensis (strain DSM 17343 / BCRC 17206 / CCUG 44338 / CIP 107171 / LMG 19424 / R1) (Ralstonia taiwanensis (strain LMG 19424))).